The sequence spans 137 residues: Large ribosomal subunit protein uL16 (137 aa).

It belongs to the universal ribosomal protein uL16 family. As to quaternary structure, part of the 50S ribosomal subunit.

In terms of biological role, binds 23S rRNA and is also seen to make contacts with the A and possibly P site tRNAs. In Afipia carboxidovorans (strain ATCC 49405 / DSM 1227 / KCTC 32145 / OM5) (Oligotropha carboxidovorans), this protein is Large ribosomal subunit protein uL16.